Here is a 154-residue protein sequence, read N- to C-terminus: Putative pre-16S rRNA nuclease (154 aa).

It belongs to the YqgF nuclease family.

The protein resides in the cytoplasm. In terms of biological role, could be a nuclease involved in processing of the 5'-end of pre-16S rRNA. This chain is Putative pre-16S rRNA nuclease, found in Rickettsia bellii (strain OSU 85-389).